Here is a 307-residue protein sequence, read N- to C-terminus: Ribosomal RNA small subunit methyltransferase H (307 aa).

S-adenosyl-L-methionine is bound by residues 34-36, Asp53, Leu88, Asp102, and Gln109; that span reads GGH.

The protein belongs to the methyltransferase superfamily. RsmH family.

Its subcellular location is the cytoplasm. It catalyses the reaction cytidine(1402) in 16S rRNA + S-adenosyl-L-methionine = N(4)-methylcytidine(1402) in 16S rRNA + S-adenosyl-L-homocysteine + H(+). Its function is as follows. Specifically methylates the N4 position of cytidine in position 1402 (C1402) of 16S rRNA. This Sulfurimonas denitrificans (strain ATCC 33889 / DSM 1251) (Thiomicrospira denitrificans (strain ATCC 33889 / DSM 1251)) protein is Ribosomal RNA small subunit methyltransferase H.